A 258-amino-acid chain; its full sequence is Pyridoxine 5'-phosphate synthase (258 aa).

Residue asparagine 16 participates in 3-amino-2-oxopropyl phosphate binding. 18-19 (DH) lines the 1-deoxy-D-xylulose 5-phosphate pocket. Position 27 (arginine 27) interacts with 3-amino-2-oxopropyl phosphate. Catalysis depends on histidine 52, which acts as the Proton acceptor. 2 residues coordinate 1-deoxy-D-xylulose 5-phosphate: arginine 54 and histidine 59. Glutamate 79 (proton acceptor) is an active-site residue. Residue threonine 109 coordinates 1-deoxy-D-xylulose 5-phosphate. Residue histidine 200 is the Proton donor of the active site. Residues glycine 201 and 222–223 (GH) each bind 3-amino-2-oxopropyl phosphate.

Belongs to the PNP synthase family. In terms of assembly, homooctamer; tetramer of dimers.

The protein localises to the cytoplasm. It catalyses the reaction 3-amino-2-oxopropyl phosphate + 1-deoxy-D-xylulose 5-phosphate = pyridoxine 5'-phosphate + phosphate + 2 H2O + H(+). The protein operates within cofactor biosynthesis; pyridoxine 5'-phosphate biosynthesis; pyridoxine 5'-phosphate from D-erythrose 4-phosphate: step 5/5. Functionally, catalyzes the complicated ring closure reaction between the two acyclic compounds 1-deoxy-D-xylulose-5-phosphate (DXP) and 3-amino-2-oxopropyl phosphate (1-amino-acetone-3-phosphate or AAP) to form pyridoxine 5'-phosphate (PNP) and inorganic phosphate. This is Pyridoxine 5'-phosphate synthase from Burkholderia lata (strain ATCC 17760 / DSM 23089 / LMG 22485 / NCIMB 9086 / R18194 / 383).